A 343-amino-acid chain; its full sequence is Aspartate carbamoyltransferase catalytic subunit (343 aa).

Residues R91 and T92 each contribute to the carbamoyl phosphate site. K119 is an L-aspartate binding site. Carbamoyl phosphate contacts are provided by R141, H171, and Q174. L-aspartate-binding residues include R204 and R259. 2 residues coordinate carbamoyl phosphate: G300 and P301.

It belongs to the aspartate/ornithine carbamoyltransferase superfamily. ATCase family. In terms of assembly, heterododecamer (2C3:3R2) of six catalytic PyrB chains organized as two trimers (C3), and six regulatory PyrI chains organized as three dimers (R2).

The enzyme catalyses carbamoyl phosphate + L-aspartate = N-carbamoyl-L-aspartate + phosphate + H(+). The protein operates within pyrimidine metabolism; UMP biosynthesis via de novo pathway; (S)-dihydroorotate from bicarbonate: step 2/3. Catalyzes the condensation of carbamoyl phosphate and aspartate to form carbamoyl aspartate and inorganic phosphate, the committed step in the de novo pyrimidine nucleotide biosynthesis pathway. The chain is Aspartate carbamoyltransferase catalytic subunit from Burkholderia orbicola (strain MC0-3).